The chain runs to 243 residues: Ubiquinone/menaquinone biosynthesis C-methyltransferase UbiE (243 aa).

Residues T69, D90, and 116–117 each bind S-adenosyl-L-methionine; that span reads DA.

The protein belongs to the class I-like SAM-binding methyltransferase superfamily. MenG/UbiE family.

The catalysed reaction is a 2-demethylmenaquinol + S-adenosyl-L-methionine = a menaquinol + S-adenosyl-L-homocysteine + H(+). The enzyme catalyses a 2-methoxy-6-(all-trans-polyprenyl)benzene-1,4-diol + S-adenosyl-L-methionine = a 5-methoxy-2-methyl-3-(all-trans-polyprenyl)benzene-1,4-diol + S-adenosyl-L-homocysteine + H(+). It participates in quinol/quinone metabolism; menaquinone biosynthesis; menaquinol from 1,4-dihydroxy-2-naphthoate: step 2/2. The protein operates within cofactor biosynthesis; ubiquinone biosynthesis. Methyltransferase required for the conversion of demethylmenaquinol (DMKH2) to menaquinol (MKH2) and the conversion of 2-polyprenyl-6-methoxy-1,4-benzoquinol (DDMQH2) to 2-polyprenyl-3-methyl-6-methoxy-1,4-benzoquinol (DMQH2). The protein is Ubiquinone/menaquinone biosynthesis C-methyltransferase UbiE of Burkholderia cenocepacia (strain ATCC BAA-245 / DSM 16553 / LMG 16656 / NCTC 13227 / J2315 / CF5610) (Burkholderia cepacia (strain J2315)).